The sequence spans 245 residues: Cytochrome c oxidase subunit 2 (245 aa).

The Mitochondrial intermembrane portion of the chain corresponds to 1–36; sequence MYMLNNMLNDVPTPWGMFFQDSATPNMEGMMELHNN. Residues 37-56 form a helical membrane-spanning segment; it reads VMFYLCMMLGFVSYMLYNML. The Mitochondrial matrix portion of the chain corresponds to 57–76; sequence TTYNHSVLPYKYLYHGQFIE. The chain crosses the membrane as a helical span at residues 77 to 101; sequence IVWTTFPAMILLIIAFPSFILLYIC. The Mitochondrial intermembrane segment spans residues 102 to 245; that stretch reads DEVIAPAMTI…GEFLAWIDEQ (144 aa). The Cu cation site is built by His-180, Cys-215, Glu-217, Cys-219, His-223, and Met-226. Position 217 (Glu-217) interacts with Mg(2+).

It belongs to the cytochrome c oxidase subunit 2 family. Component of the cytochrome c oxidase (complex IV, CIV), a multisubunit enzyme composed of a catalytic core of 3 subunits and several supernumerary subunits. The complex exists as a monomer or a dimer and forms supercomplexes (SCs) in the inner mitochondrial membrane with ubiquinol-cytochrome c oxidoreductase (cytochrome b-c1 complex, complex III, CIII). Cu cation is required as a cofactor.

The protein localises to the mitochondrion inner membrane. It catalyses the reaction 4 Fe(II)-[cytochrome c] + O2 + 8 H(+)(in) = 4 Fe(III)-[cytochrome c] + 2 H2O + 4 H(+)(out). In terms of biological role, component of the cytochrome c oxidase, the last enzyme in the mitochondrial electron transport chain which drives oxidative phosphorylation. The respiratory chain contains 3 multisubunit complexes succinate dehydrogenase (complex II, CII), ubiquinol-cytochrome c oxidoreductase (cytochrome b-c1 complex, complex III, CIII) and cytochrome c oxidase (complex IV, CIV), that cooperate to transfer electrons derived from NADH and succinate to molecular oxygen, creating an electrochemical gradient over the inner membrane that drives transmembrane transport and the ATP synthase. Cytochrome c oxidase is the component of the respiratory chain that catalyzes the reduction of oxygen to water. Electrons originating from reduced cytochrome c in the intermembrane space (IMS) are transferred via the dinuclear copper A center (CU(A)) of subunit 2 and heme A of subunit 1 to the active site in subunit 1, a binuclear center (BNC) formed by heme A3 and copper B (CU(B)). The BNC reduces molecular oxygen to 2 water molecules using 4 electrons from cytochrome c in the IMS and 4 protons from the mitochondrial matrix. The chain is Cytochrome c oxidase subunit 2 (COX2) from Dekkera bruxellensis (Brettanomyces custersii).